We begin with the raw amino-acid sequence, 548 residues long: Glutamate--tRNA ligase (548 aa).

Residues 102 to 112 carry the 'HIGH' region motif; the sequence is PSPSGPLHIGH.

Belongs to the class-I aminoacyl-tRNA synthetase family. Glutamate--tRNA ligase type 2 subfamily.

It is found in the cytoplasm. It catalyses the reaction tRNA(Glu) + L-glutamate + ATP = L-glutamyl-tRNA(Glu) + AMP + diphosphate. In terms of biological role, catalyzes the attachment of glutamate to tRNA(Glu) in a two-step reaction: glutamate is first activated by ATP to form Glu-AMP and then transferred to the acceptor end of tRNA(Glu). This is Glutamate--tRNA ligase from Thermoplasma volcanium (strain ATCC 51530 / DSM 4299 / JCM 9571 / NBRC 15438 / GSS1).